A 162-amino-acid polypeptide reads, in one-letter code: UPF0178 protein RHOS4_24670 (162 aa).

The protein belongs to the UPF0178 family.

The sequence is that of UPF0178 protein RHOS4_24670 from Cereibacter sphaeroides (strain ATCC 17023 / DSM 158 / JCM 6121 / CCUG 31486 / LMG 2827 / NBRC 12203 / NCIMB 8253 / ATH 2.4.1.) (Rhodobacter sphaeroides).